A 182-amino-acid chain; its full sequence is Probable RNA 2'-phosphotransferase (182 aa).

The protein belongs to the KptA/TPT1 family.

In terms of biological role, removes the 2'-phosphate from RNA via an intermediate in which the phosphate is ADP-ribosylated by NAD followed by a presumed transesterification to release the RNA and generate ADP-ribose 1''-2''-cyclic phosphate (APPR&gt;P). May function as an ADP-ribosylase. This Trichormus variabilis (strain ATCC 29413 / PCC 7937) (Anabaena variabilis) protein is Probable RNA 2'-phosphotransferase.